A 1500-amino-acid polypeptide reads, in one-letter code: MMMARKQDVRIPTYNISVVGLSGTEKEKGQCGIGKSCLCNRFVRPSADEFHLDHTSVLSTSDFGGRVVNNDHFLYWGEVSRSLEDCVECKMHIVEQTEFIDDQTFQPHRSTALQPYIKRAAATKLASAEKLMYFCTDQLGLEQDFEQKQMPDGKLLIDGFLLGIDVSRGMNRNFDDQLKFVSNLYNQLAKTKKPIVVVLTKCDEGVERYIRDAHTFALSKKNLQVVETSARSNVNVDLAFSTLVQLIDKSRGKTKIIPYFEALKQQSQQIATAKDKYEWLVSRIVKNHNENWLSVSRKMQASPEYQDYVYLEGTQKAKKLFLQHIHRLKHEHIERRRKLYLAALPLAFEALIPNLDEIDHLSCIKTKKLLETKPEFLKWFVVLEETPWDATSHIDNMENERIPFDLMDTVPAEQLYEAHLEKLRNERKRAEMRRAFKENLETSPFITPGKPWEEARSFIMNEDFYQWLEESVYMDIYGKHQKQIIDKAKEEFQELLLEYSELFYELELDAKPSKEKMGVIQDVLGEEQRFKALQKLQAERDALILKHIHFVYHPTKETCPSCPACVDAKIEHLISSRFIRPSDRNQKNSLSDPNIDRINLVILGKDGLARELANEIRALCTNDDKYVIDGKMYELSLRPIEGNVRLPVNSFQTPTFQPHGCLCLYNSKESLSYVVESIEKSRESTLGRRDNHLVHLPLTLILVNKRGDTSGETLHSLIQQGQQIASKLQCVFLDPASAGIGYGRNINEKQISQVLKGLLDSKRNLNLVSSTASIKDLADVDLRIVMCLMCGDPFSADDILFPVLQSQTCKSSHCGSNNSVLLELPIGLHKKRIELSILSYHSSFSIRKSRLVHGYIVFYSAKRKASLAMLRAFLCEVQDIIPIQLVALTDGAIDVLDNDLSREQLSEGEEIAQEIDGRFTSIPCSQPQHKLEIFHPFFKDVVDKKNIIEATHMYDNAAEACSTTEEVFNSPRAGSPLCNSNLQDSEEDIEPPSYSLFREDTSLPSLSKDHSKLSMELEGNDGLSFIMSNFESKLNNKVPPPVKPKPPVQFDITKGDLSYLDQGHRDGQRKSVSSSTWLPPDGFDPSDYAEPMDAVVKPRNEEENIYSVPHDSTQGKIITIRNINKAQSNGSGNGSDSEMDTSSLERGRKVSIVSKPVLYRTRCSRLGRFASYRTSFSVGSDDELGPIRKKEEDQASQGYKGDNAVIPYETDEDPRRRNILRSLRRNTKKPKPKPRPSITKATWESNYFGVPLTTVVTPEKPIPVFIERCIEYIEATGLSTEGIYRVSGNKSEMESLQRQFDQDHNLDLAEKDFTVNTVAGAMKSFFSELPDPLVPYNMQIDLVEAHKINDREQKLHALKEVLKKFPKENHEVFKYVISHLNKVSHNNKVNLMTSENLSICFWPTLMRPDFSTMDALTATRTYQTIIELFIQQCPFFFHNRPISEPPGATPSSPSAVASTVPFLTSTPVTSQPSPPQSPPPTPQSPMQALLPSQLQAEHTL.

The interval 1-266 is has GTPase activity, required for proper localization; that stretch reads MMMARKQDVR…IPYFEALKQQ (266 aa). Residues Lys28, 33–37, Leu52, Ser56, 95–97, 201–203, and 229–231 each bind GTP; these read IGKSC, EQT, KCD, and SAR. FF domains lie at 270 to 327, 368 to 422, 429 to 483, and 485 to 550; these read IATA…HIHR, KLLE…HLEK, RAEM…HQKQ, and IDKA…HIHF. Tyr308 is modified (phosphotyrosine). The residue at position 589 (Ser589) is a Phosphoserine. Positions 592–767 constitute a pG1 pseudoGTPase domain; sequence DPNIDRINLV…LLDSKRNLNL (176 aa). A phosphoserine mark is found at Ser770 and Ser773. Residues 783–947 form the pG2 pseudoGTPase domain; it reads RIVMCLMCGD…FKDVVDKKNI (165 aa). 5 positions are modified to phosphoserine: Ser970, Ser975, Ser985, Ser1002, and Ser1073. Residues 970-989 form a disordered region; it reads SPRAGSPLCNSNLQDSEEDI. The tract at residues 1058–1090 is disordered; the sequence is SYLDQGHRDGQRKSVSSSTWLPPDGFDPSDYAE. Tyr1088 carries the post-translational modification Phosphotyrosine. Tyr1106 bears the Phosphotyrosine; by ABL2 and PTK6 mark. A compositionally biased stretch (polar residues) spans 1125 to 1142; that stretch reads KAQSNGSGNGSDSEMDTS. The tract at residues 1125-1147 is disordered; the sequence is KAQSNGSGNGSDSEMDTSSLERG. Phosphoserine is present on residues Ser1135, Ser1143, Ser1151, Ser1177, Ser1180, and Ser1222. The segment at 1178–1208 is disordered; the sequence is VGSDDELGPIRKKEEDQASQGYKGDNAVIPY. A required for phospholipid binding and regulation of the substrate preference region spans residues 1214–1237; it reads PRRRNILRSLRRNTKKPKPKPRPS. Thr1227 bears the Phosphothreonine mark. Ser1237 carries the post-translational modification Phosphoserine. Residues 1250-1437 form the Rho-GAP domain; that stretch reads VPLTTVVTPE…LFIQQCPFFF (188 aa). The interval 1444–1500 is disordered; the sequence is EPPGATPSSPSAVASTVPFLTSTPVTSQPSPPQSPPPTPQSPMQALLPSQLQAEHTL. Positions 1449 to 1471 are enriched in low complexity; the sequence is TPSSPSAVASTVPFLTSTPVTSQ. Over residues 1472 to 1483 the composition is skewed to pro residues; that stretch reads PSPPQSPPPTPQ. Phosphoserine is present on residues Ser1473 and Ser1477. Thr1481 carries the phosphothreonine modification. A Phosphoserine modification is found at Ser1484. A compositionally biased stretch (polar residues) spans 1490-1500; that stretch reads LPSQLQAEHTL.

Interacts with RASA1. Interacts with the general transcription factor GTF2I, the interaction sequesters GTF2I in the cytoplasm. Post-translationally, phosphorylation of Tyr-1106 by PTK6 promotes the association with RASA1, inactivating RHOA while activating RAS. Phosphorylation at Tyr-308 by PDGFRA inhibits binding to GTF2I. Phosphorylated by PRKCA at Ser-1222 and Thr-1227, induces relocalization from the cytoplasm to regions of plasma membrane ruffling and prevents the binding and substrate specificity regulation by phospholipids. In brain, phosphorylated by FYN and SRC. During focal adhesion formation, phosphorylated by MAPK1 and MAPK3 at the C-terminal region, probably at Ser-1452, Ser-1477, Thr-1481 and Ser-1484. Phosphorylation by MAPK1 and MAPK3 inhibits GAP function and localizes ARGHAP35 away from newly forming focal adhesions and stress fibers in cells spreading on fibronectin. Phosphorylation at Ser-1477 and Thr-1481 by GSK3B requires priming by MAPK and inhibits RhoGAP activity and modulates polarized cell migration. As to expression, strongly expressed in retina (photoreceptor layer) and brain. Expression is maximal in the occipital, frontal, temporal lobe and also the cerebellum. Medium expression in the medulla and also in kidney, lung, liver, heart and spleen.

The protein localises to the cytoplasm. It localises to the cytoskeleton. The protein resides in the cilium basal body. It is found in the nucleus. Its subcellular location is the cell membrane. Its function is as follows. Rho GTPase-activating protein (GAP). Binds several acidic phospholipids which inhibits the Rho GAP activity to promote the Rac GAP activity. This binding is inhibited by phosphorylation by PRKCA. Involved in cell differentiation as well as cell adhesion and migration, plays an important role in retinal tissue morphogenesis, neural tube fusion, midline fusion of the cerebral hemispheres and mammary gland branching morphogenesis. Transduces signals from p21-ras to the nucleus, acting via the ras GTPase-activating protein (GAP). Transduces SRC-dependent signals from cell-surface adhesion molecules, such as laminin, to promote neurite outgrowth. Regulates axon outgrowth, guidance and fasciculation. Modulates Rho GTPase-dependent F-actin polymerization, organization and assembly, is involved in polarized cell migration and in the positive regulation of ciliogenesis and cilia elongation. During mammary gland development, is required in both the epithelial and stromal compartments for ductal outgrowth. Represses transcription of the glucocorticoid receptor by binding to the cis-acting regulatory sequence 5'-GAGAAAAGAAACTGGAGAAACTC-3'; this function is however unclear and would need additional experimental evidences. The polypeptide is Rho GTPase-activating protein 35 (Canis lupus familiaris (Dog)).